A 728-amino-acid polypeptide reads, in one-letter code: Diacylglycerol kinase 1 (728 aa).

A helical transmembrane segment spans residues 27 to 48 (GLMFSCFVAALVGILTIAYTAF). Phorbol-ester/DAG-type zinc fingers lie at residues 79–137 (PHSW…PKDC) and 149–212 (VHQW…GDIC). Disordered stretches follow at residues 265–296 (KQTN…PTVN) and 308–336 (VMNG…TGSF). The span at 267 to 294 (TNETSADTGNSGSNCDESTESTADTGPT) shows a compositional bias: polar residues. Residues 310–319 (NGDSSNGDSD) show a composition bias toward low complexity. In terms of domain architecture, DAGKc spans 357 to 496 (SDARPLLVFI…LDRWKVSILN (140 aa)). Residues lysine 491 and lysine 500 each participate in a glycyl lysine isopeptide (Lys-Gly) (interchain with G-Cter in ubiquitin) cross-link.

It belongs to the eukaryotic diacylglycerol kinase family. As to quaternary structure, monomer. Expressed in roots, shoots, and leaves.

Its subcellular location is the membrane. The enzyme catalyses a 1,2-diacyl-sn-glycerol + ATP = a 1,2-diacyl-sn-glycero-3-phosphate + ADP + H(+). In terms of biological role, phosphorylates the second messenger diacylglycerol (DAG) to generate phosphatidic acid (PA), another important signaling molecule. PA is required for plant development and responses to abiotic stress and pathogen attack. May be involved in the accumulation of PA during cold stress. The sequence is that of Diacylglycerol kinase 1 (DGK1) from Arabidopsis thaliana (Mouse-ear cress).